Here is a 468-residue protein sequence, read N- to C-terminus: ATP synthase subunit beta (468 aa).

155-162 (GGAGVGKT) is a binding site for ATP.

This sequence belongs to the ATPase alpha/beta chains family. F-type ATPases have 2 components, CF(1) - the catalytic core - and CF(0) - the membrane proton channel. CF(1) has five subunits: alpha(3), beta(3), gamma(1), delta(1), epsilon(1). CF(0) has three main subunits: a(1), b(2) and c(9-12). The alpha and beta chains form an alternating ring which encloses part of the gamma chain. CF(1) is attached to CF(0) by a central stalk formed by the gamma and epsilon chains, while a peripheral stalk is formed by the delta and b chains.

Its subcellular location is the cell membrane. The catalysed reaction is ATP + H2O + 4 H(+)(in) = ADP + phosphate + 5 H(+)(out). In terms of biological role, produces ATP from ADP in the presence of a proton gradient across the membrane. The catalytic sites are hosted primarily by the beta subunits. The polypeptide is ATP synthase subunit beta (Bacillus cereus (strain B4264)).